The chain runs to 215 residues: Urease accessory protein UreG (215 aa).

The interval 1 to 21 is disordered; that stretch reads MNAPAPSSARRTKKLPPLRVG. 24 to 31 serves as a coordination point for GTP; that stretch reads GPVGSGKT.

Belongs to the SIMIBI class G3E GTPase family. UreG subfamily. Homodimer. UreD, UreF and UreG form a complex that acts as a GTP-hydrolysis-dependent molecular chaperone, activating the urease apoprotein by helping to assemble the nickel containing metallocenter of UreC. The UreE protein probably delivers the nickel.

The protein localises to the cytoplasm. Functionally, facilitates the functional incorporation of the urease nickel metallocenter. This process requires GTP hydrolysis, probably effectuated by UreG. In Burkholderia lata (strain ATCC 17760 / DSM 23089 / LMG 22485 / NCIMB 9086 / R18194 / 383), this protein is Urease accessory protein UreG.